A 913-amino-acid chain; its full sequence is Alanine--tRNA ligase (913 aa).

Residues histidine 608, histidine 612, cysteine 711, and histidine 715 each contribute to the Zn(2+) site.

This sequence belongs to the class-II aminoacyl-tRNA synthetase family. It depends on Zn(2+) as a cofactor.

The protein resides in the cytoplasm. The catalysed reaction is tRNA(Ala) + L-alanine + ATP = L-alanyl-tRNA(Ala) + AMP + diphosphate. Its function is as follows. Catalyzes the attachment of alanine to tRNA(Ala) in a two-step reaction: alanine is first activated by ATP to form Ala-AMP and then transferred to the acceptor end of tRNA(Ala). Also edits incorrectly charged Ser-tRNA(Ala) and Gly-tRNA(Ala) via its editing domain. In Methanocorpusculum labreanum (strain ATCC 43576 / DSM 4855 / Z), this protein is Alanine--tRNA ligase.